The following is a 275-amino-acid chain: Formamidopyrimidine-DNA glycosylase (275 aa).

Pro2 serves as the catalytic Schiff-base intermediate with DNA. Glu3 acts as the Proton donor in catalysis. Lys58 serves as the catalytic Proton donor; for beta-elimination activity. His91, Arg109, and Lys154 together coordinate DNA. An FPG-type zinc finger spans residues 240 to 274; sequence AVYERAGLACRVCGTPIRRLVQGQRATYFCPHCQK. Arg264 acts as the Proton donor; for delta-elimination activity in catalysis.

Belongs to the FPG family. Monomer. Zn(2+) is required as a cofactor.

The enzyme catalyses Hydrolysis of DNA containing ring-opened 7-methylguanine residues, releasing 2,6-diamino-4-hydroxy-5-(N-methyl)formamidopyrimidine.. It catalyses the reaction 2'-deoxyribonucleotide-(2'-deoxyribose 5'-phosphate)-2'-deoxyribonucleotide-DNA = a 3'-end 2'-deoxyribonucleotide-(2,3-dehydro-2,3-deoxyribose 5'-phosphate)-DNA + a 5'-end 5'-phospho-2'-deoxyribonucleoside-DNA + H(+). Involved in base excision repair of DNA damaged by oxidation or by mutagenic agents. Acts as a DNA glycosylase that recognizes and removes damaged bases. Has a preference for oxidized purines, such as 7,8-dihydro-8-oxoguanine (8-oxoG). Has AP (apurinic/apyrimidinic) lyase activity and introduces nicks in the DNA strand. Cleaves the DNA backbone by beta-delta elimination to generate a single-strand break at the site of the removed base with both 3'- and 5'-phosphates. This Bordetella avium (strain 197N) protein is Formamidopyrimidine-DNA glycosylase.